Reading from the N-terminus, the 1106-residue chain is GYF domain-containing protein gyf-1 (1106 aa).

Residues 1 to 17 are compositionally biased toward polar residues; sequence MSSVSSAEPTAQQNFNP. Disordered regions lie at residues 1-50, 160-370, and 383-434; these read MSSV…GGFD, GALQ…DSTV, and KAST…SAWS. The span at 30 to 42 shows a compositional bias: low complexity; sequence RGGSISSGNNRSS. Polar residues predominate over residues 162 to 180; it reads LQNGQSPTSRWAPKSSWNK. A compositionally biased stretch (gly residues) spans 207 to 224; it reads GRGGGRIGGENGFGGATN. The span at 229-243 shows a compositional bias: polar residues; it reads AAQNEDSPGTYQSKF. Gly residues predominate over residues 248–261; the sequence is RGGGAGSVGRGGST. A compositionally biased stretch (polar residues) spans 306–322; it reads VGSTSRTSTNAAPQSSE. 2 stretches are compositionally biased toward low complexity: residues 334–353 and 390–410; these read QRTQ…QQAQ and PPQQ…APSR. In terms of domain architecture, GYF spans 459–508; that stretch reads PVQFYYMDPTETRRGPFPKDQMNVWFKAGYFTDESLRVQRGENGEYKTIG. Positions 584-746 form a coiled coil; that stretch reads LDDHNRRLAE…ERKRAAERER (163 aa). 4 disordered regions span residues 778–811, 909–928, 1026–1076, and 1087–1106; these read AFTG…KTAP, KNSQ…SAKV, AGGR…DGNI, and RLNK…PSRR. Over residues 786–801 the composition is skewed to polar residues; that stretch reads VSPSGSEESDEWISTS. Residues 1046 to 1057 are compositionally biased toward low complexity; that stretch reads SDSNSGSNSNSG.

This chain is GYF domain-containing protein gyf-1, found in Caenorhabditis elegans.